A 173-amino-acid polypeptide reads, in one-letter code: Protein Rv3753c (173 aa).

The chain is Protein Rv3753c from Mycobacterium tuberculosis (strain ATCC 25618 / H37Rv).